We begin with the raw amino-acid sequence, 571 residues long: E3 ubiquitin-protein ligase ipaH3 (571 aa).

Residues 1-260 (MSIMLPINNN…SQQTAQPDYH (260 aa)) are interaction with target proteins. LRR repeat units follow at residues 58 to 81 (INQF…LPPQ), 83 to 99 (TVLE…PELP), 100 to 119 (ASLE…PELP), 120 to 144 (ASLK…LLEY), 146 to 159 (NADN…PELP), 160 to 184 (TSLE…SLEA), 186 to 202 (DVST…PVRN), 205 to 229 (SEET…ILSL), and 232 to 260 (TCTI…PDYH). Residues 269 to 278 (SDGQQNTLHR) form a linker region. Residues 279 to 571 (PLADAVTAWF…SENGSQLHHS (293 aa)) form the NEL domain. Positions 279-571 (PLADAVTAWF…SENGSQLHHS (293 aa)) are E3 ubiquitin-protein ligase catalytic domain. Cys-363 serves as the catalytic Glycyl thioester intermediate.

The protein belongs to the LRR-containing bacterial E3 ligase family. Ubiquitinated in the presence of host E1 ubiquitin-activating enzyme, E2 ubiquitin-conjugating enzyme UBE2D3 and ubiquitin.

The protein localises to the secreted. The protein resides in the host cytoplasm. The catalysed reaction is S-ubiquitinyl-[E2 ubiquitin-conjugating enzyme]-L-cysteine + [acceptor protein]-L-lysine = [E2 ubiquitin-conjugating enzyme]-L-cysteine + N(6)-ubiquitinyl-[acceptor protein]-L-lysine.. In terms of biological role, effector proteins function to alter host cell physiology and promote bacterial survival in host tissues. This protein is an E3 ubiquitin ligase that interferes with host's ubiquitination pathway. Synthesizes a 'Lys-48'-linked ubiquitin chain, which requires non-covalent binding between ubiquitin and the host ubiquitin-conjugating enzyme UBE2D1. The polypeptide is E3 ubiquitin-protein ligase ipaH3 (ipaH3) (Shigella flexneri).